The following is a 167-amino-acid chain: Transcriptional regulator MraZ (167 aa).

2 consecutive SpoVT-AbrB domains span residues 8–51 and 92–135; these read ESHH…YGDH and SLPT…KPET.

The protein belongs to the MraZ family. Forms oligomers.

The protein resides in the cytoplasm. Its subcellular location is the nucleoid. The protein is Transcriptional regulator MraZ of Ruegeria sp. (strain TM1040) (Silicibacter sp.).